Consider the following 70-residue polypeptide: Small ribosomal subunit protein bS21 (70 aa).

Belongs to the bacterial ribosomal protein bS21 family.

This Helicobacter pylori (strain J99 / ATCC 700824) (Campylobacter pylori J99) protein is Small ribosomal subunit protein bS21 (rpsU).